The chain runs to 215 residues: Ribosomal RNA small subunit methyltransferase G (215 aa).

S-adenosyl-L-methionine is bound by residues Gly-71, Leu-76, and Arg-135.

It belongs to the methyltransferase superfamily. RNA methyltransferase RsmG family.

The protein localises to the cytoplasm. In terms of biological role, specifically methylates the N7 position of a guanine in 16S rRNA. This Salinibacter ruber (strain DSM 13855 / M31) protein is Ribosomal RNA small subunit methyltransferase G.